A 149-amino-acid chain; its full sequence is Large ribosomal subunit protein uL13 (149 aa).

It belongs to the universal ribosomal protein uL13 family. As to quaternary structure, part of the 50S ribosomal subunit.

This protein is one of the early assembly proteins of the 50S ribosomal subunit, although it is not seen to bind rRNA by itself. It is important during the early stages of 50S assembly. This chain is Large ribosomal subunit protein uL13, found in Borrelia hermsii (strain HS1 / DAH).